A 307-amino-acid polypeptide reads, in one-letter code: Taste receptor type 2 member 106 (307 aa).

Over 1–7 (MLTIPEG) the chain is Extracellular. Residues 8-28 (ILLCFITSGSVLGVLGNGFIL) form a helical membrane-spanning segment. The Cytoplasmic portion of the chain corresponds to 29-41 (HVNCTDCVRQKFS). The helical transmembrane segment at 42-62 (TTGFIFTGLAISRICVICIII) threads the bilayer. The Extracellular segment spans residues 63-81 (SDGYLKLFSPHMVASDAHI). A helical transmembrane segment spans residues 82 to 104 (IGISYLWIITNHTSTCFATILNL). Residues 105-124 (FYFLKIANFSHYIFFCLKRK) are Cytoplasmic-facing. A helical transmembrane segment spans residues 125–145 (LNTIFIFLLGCLFISWSVAFP). Residues 146–179 (QTVKIFNDKMKHRNTSWKFHLHKSKFIINHILLN) are Extracellular-facing. Asn-159 carries N-linked (GlcNAc...) asparagine glycosylation. Residues 180 to 200 (LGVIFFCMVAIITSFLLIISL) form a helical membrane-spanning segment. Topologically, residues 201-227 (WKHNRKMQLYVSRFKSLNTEVHLKVMK) are cytoplasmic. Residues 228 to 248 (VLISFIILLILHVIGILIETL) form a helical membrane-spanning segment. Topologically, residues 249-257 (SFLRYENKL) are extracellular. The helical transmembrane segment at 258–278 (LLILGLNFSSMYPCCHSFILI) threads the bilayer. Residues 279–307 (LANNQLKQASLKALKQFKCHKKDKDVRET) lie on the Cytoplasmic side of the membrane.

It belongs to the G-protein coupled receptor T2R family.

The protein localises to the membrane. In terms of biological role, putative taste receptor which may play a role in the perception of bitterness. The protein is Taste receptor type 2 member 106 of Rattus norvegicus (Rat).